Reading from the N-terminus, the 255-residue chain is Very-long-chain (3R)-3-hydroxyacyl-CoA dehydratase 2 (255 aa).

At 3–42 (AAAAATAAAKGNGGGGGRAGAGDASGTRKKKGPGPLATAY) the chain is on the cytoplasmic side. The interval 11-34 (AKGNGGGGGRAGAGDASGTRKKKG) is disordered. Residues 13–22 (GNGGGGGRAG) show a composition bias toward gly residues. The helical transmembrane segment at 43-61 (LVIYNVVMTAGWLVIAVGL) threads the bilayer. At 62 to 80 (VRAYLAKGSYHSLYYSIEK) the chain is on the lumenal side. A helical transmembrane segment spans residues 81–98 (PLKFFQTGALLEILHCAI). Topologically, residues 99–108 (GIVPSSVVLT) are cytoplasmic. A helical transmembrane segment spans residues 109-126 (SFQVMSRVFLIWAVTHSV). The Lumenal segment spans residues 127-131 (KEVQS). A helical transmembrane segment spans residues 132–147 (EDSVLLFVIAWTITEI). The Cytoplasmic segment spans residues 148–170 (IRYSFYTFSLLNHLPYLIKWARY). The chain crosses the membrane as a helical span at residues 171–188 (TLFIVLYPMGVSGELLTI). Residues Tyr177 and Glu184 contribute to the active site. Topologically, residues 189–218 (YAALPFVRQAGLYSISLPNKYNFSFDYYAF) are lumenal. Residues 199–215 (GLYSISLPNKYNFSFDY) form a may be involved in interaction with TECR region. N-linked (GlcNAc...) asparagine glycosylation occurs at Asn210. The chain crosses the membrane as a helical span at residues 219–236 (LILIMISYIPIFPQLYFH). The Cytoplasmic portion of the chain corresponds to 237-255 (MIHQRRKILSHTEEHKKFE).

The protein belongs to the very long-chain fatty acids dehydratase HACD family. As to quaternary structure, may interact with enzymes of the ELO family (including ELOVL1); with those enzymes that mediate condensation, the first of the four steps of the reaction cycle responsible for fatty acids elongation, may be part of a larger fatty acids elongase complex. Interacts with BCAP31. Interacts (via the third lumenal loop) with TECR.

It localises to the endoplasmic reticulum membrane. It catalyses the reaction a very-long-chain (3R)-3-hydroxyacyl-CoA = a very-long-chain (2E)-enoyl-CoA + H2O. The enzyme catalyses (3R)-hydroxyhexadecanoyl-CoA = (2E)-hexadecenoyl-CoA + H2O. It carries out the reaction (3R)-hydroxyoctadecanoyl-CoA = (2E)-octadecenoyl-CoA + H2O. The catalysed reaction is (3R)-hydroxyeicosanoyl-CoA = (2E)-eicosenoyl-CoA + H2O. It catalyses the reaction (3R)-hydroxydocosanoyl-CoA = (2E)-docosenoyl-CoA + H2O. The enzyme catalyses (3R)-hydroxytetracosanoyl-CoA = (2E)-tetracosenoyl-CoA + H2O. It carries out the reaction (3R)-hydroxyhexacosanoyl-CoA = (2E)-hexacosenoyl-CoA + H2O. Its pathway is lipid metabolism; fatty acid biosynthesis. Its function is as follows. Catalyzes the third of the very long-chain fatty acids (VLCFA) elongation four-step cycle (condensation, reduction, dehydration, and reduction). This endoplasmic reticulum-elongation process is characterized by the addition of two carbons to the lipid chain through each cycle. This enzyme catalyzes the dehydration of the 3-hydroxyacyl-CoA intermediate into trans-2,3-enoyl-CoA, within each cycle of elongation. Therefore, it participates in the production of various VLCFAs involved in multiple biological processes as precursors of membrane lipids and lipid mediators. The sequence is that of Very-long-chain (3R)-3-hydroxyacyl-CoA dehydratase 2 from Pongo abelii (Sumatran orangutan).